An 80-amino-acid polypeptide reads, in one-letter code: uncharacterized protein (80 aa).

The protein belongs to the BolA/IbaG family.

This is an uncharacterized protein from Buchnera aphidicola subsp. Acyrthosiphon pisum (strain APS) (Acyrthosiphon pisum symbiotic bacterium).